A 903-amino-acid chain; its full sequence is Protein translocase subunit SecA (903 aa).

Residues glutamine 89, 107–111, and aspartate 502 each bind ATP; that span reads GEGKT. Zn(2+)-binding residues include cysteine 886, cysteine 888, cysteine 897, and histidine 898.

This sequence belongs to the SecA family. In terms of assembly, monomer and homodimer. Part of the essential Sec protein translocation apparatus which comprises SecA, SecYEG and auxiliary proteins SecDF-YajC and YidC. The cofactor is Zn(2+).

It is found in the cell inner membrane. The protein localises to the cytoplasm. The catalysed reaction is ATP + H2O + cellular proteinSide 1 = ADP + phosphate + cellular proteinSide 2.. Part of the Sec protein translocase complex. Interacts with the SecYEG preprotein conducting channel. Has a central role in coupling the hydrolysis of ATP to the transfer of proteins into and across the cell membrane, serving both as a receptor for the preprotein-SecB complex and as an ATP-driven molecular motor driving the stepwise translocation of polypeptide chains across the membrane. In Sinorhizobium medicae (strain WSM419) (Ensifer medicae), this protein is Protein translocase subunit SecA.